The chain runs to 224 residues: Protein LURP-one-related 1 (224 aa).

The interval 1–23 is disordered; sequence MQQPYEYRYPQGTGPSAPPPPPK.

Belongs to the LOR family.

Might be related to the phospholipid scramblase and tubby-like superfamily of membrane tethered transcription factors. This is Protein LURP-one-related 1 from Arabidopsis thaliana (Mouse-ear cress).